Reading from the N-terminus, the 340-residue chain is uncharacterized protein (340 aa).

A run of 2 helical transmembrane segments spans residues 162-182 and 239-259; these read PLVPLVAGPLPVAFFIGVLAG and FWISLYFPLTMRSLCNAIVVP.

It localises to the cell membrane. This is an uncharacterized protein from Mycobacterium bovis (strain ATCC BAA-935 / AF2122/97).